A 771-amino-acid polypeptide reads, in one-letter code: Conserved oligomeric Golgi complex subunit 6 (771 aa).

The protein belongs to the COG6 family.

The protein resides in the golgi apparatus membrane. Acts as a component of the peripheral membrane COG complex that is involved in intra-Golgi protein trafficking. COG is located at the cis-Golgi, and regulates tethering of retrograde intra-Golgi vesicles and possibly a number of other membrane trafficking events. This is Conserved oligomeric Golgi complex subunit 6 (COG6) from Candida albicans (strain SC5314 / ATCC MYA-2876) (Yeast).